The chain runs to 340 residues: Centromere protein N (340 aa).

Phosphoserine occurs at positions 227 and 236.

This sequence belongs to the CENP-N/CHL4 family. In terms of assembly, component of the CENPA-NAC complex, at least composed of CENPA, CENPC, CENPH, CENPM, CENPN, CENPT and CENPU. The CENPA-NAC complex interacts with the CENPA-CAD complex, composed of CENPI, CENPK, CENPL, CENPO, CENPP, CENPQ, CENPR and CENPS. Interacts directly with CENPA. Identified in a centromere complex containing histones H2A, H2B and H4, and at least CENPA, CENPB, CENPC, CENPT, CENPN, HJURP, SUPT16H, SSRP1 and RSF1.

It is found in the nucleus. It localises to the chromosome. Its subcellular location is the centromere. The protein resides in the kinetochore. In terms of biological role, component of the CENPA-NAC (nucleosome-associated) complex, a complex that plays a central role in assembly of kinetochore proteins, mitotic progression and chromosome segregation. The CENPA-NAC complex recruits the CENPA-CAD (nucleosome distal) complex and may be involved in incorporation of newly synthesized CENPA into centromeres. CENPN is the first protein to bind specifically to CENPA nucleosomes and the direct binding of CENPA nucleosomes by CENPN is required for centromere assembly. Required for chromosome congression and efficiently align the chromosomes on a metaphase plate. The sequence is that of Centromere protein N (Cenpn) from Rattus norvegicus (Rat).